The following is a 147-amino-acid chain: Large ribosomal subunit protein bL9 (147 aa).

This sequence belongs to the bacterial ribosomal protein bL9 family.

Binds to the 23S rRNA. This is Large ribosomal subunit protein bL9 from Mesoplasma florum (strain ATCC 33453 / NBRC 100688 / NCTC 11704 / L1) (Acholeplasma florum).